We begin with the raw amino-acid sequence, 196 residues long: CAG pathogenicity island protein 13 (196 aa).

The sequence is that of CAG pathogenicity island protein 13 (cagS) from Helicobacter pylori (strain ATCC 700392 / 26695) (Campylobacter pylori).